The primary structure comprises 296 residues: Acetyl-coenzyme A carboxylase carboxyl transferase subunit beta (296 aa).

The region spanning 25–294 is the CoA carboxyltransferase N-terminal domain; sequence VWTKCTACEQ…PFVEPELISE (270 aa). Zn(2+) contacts are provided by C29, C32, C48, and C51. Residues 29-51 form a C4-type zinc finger; that stretch reads CTACEQVLYSEELKRNLYVCPKC.

It belongs to the AccD/PCCB family. In terms of assembly, acetyl-CoA carboxylase is a heterohexamer composed of biotin carboxyl carrier protein (AccB), biotin carboxylase (AccC) and two subunits each of ACCase subunit alpha (AccA) and ACCase subunit beta (AccD). Zn(2+) serves as cofactor.

The protein resides in the cytoplasm. It carries out the reaction N(6)-carboxybiotinyl-L-lysyl-[protein] + acetyl-CoA = N(6)-biotinyl-L-lysyl-[protein] + malonyl-CoA. It functions in the pathway lipid metabolism; malonyl-CoA biosynthesis; malonyl-CoA from acetyl-CoA: step 1/1. Component of the acetyl coenzyme A carboxylase (ACC) complex. Biotin carboxylase (BC) catalyzes the carboxylation of biotin on its carrier protein (BCCP) and then the CO(2) group is transferred by the transcarboxylase to acetyl-CoA to form malonyl-CoA. The polypeptide is Acetyl-coenzyme A carboxylase carboxyl transferase subunit beta (Haemophilus influenzae (strain 86-028NP)).